A 151-amino-acid chain; its full sequence is uncharacterized protein (151 aa).

A disordered region spans residues 122–151 (GVAQRQVPTTGTHSFFHCTSEGNKEKPHHF).

This is an uncharacterized protein from Homo sapiens (Human).